The primary structure comprises 725 residues: Phosphoribosylformylglycinamidine synthase subunit PurL (725 aa).

Residue H42 is part of the active site. ATP-binding residues include Y45 and K84. E86 is a binding site for Mg(2+). Substrate contacts are provided by residues 87-90 and R109; that span reads SHNH. The active-site Proton acceptor is H88. D110 contacts Mg(2+). Q237 contributes to the substrate binding site. A Mg(2+)-binding site is contributed by D265. 309-311 provides a ligand contact to substrate; that stretch reads ESQ. ATP is bound by residues D491 and G528. Mg(2+) is bound at residue N529. S531 is a binding site for substrate.

Belongs to the FGAMS family. Monomer. Part of the FGAM synthase complex composed of 1 PurL, 1 PurQ and 2 PurS subunits.

It localises to the cytoplasm. It carries out the reaction N(2)-formyl-N(1)-(5-phospho-beta-D-ribosyl)glycinamide + L-glutamine + ATP + H2O = 2-formamido-N(1)-(5-O-phospho-beta-D-ribosyl)acetamidine + L-glutamate + ADP + phosphate + H(+). It functions in the pathway purine metabolism; IMP biosynthesis via de novo pathway; 5-amino-1-(5-phospho-D-ribosyl)imidazole from N(2)-formyl-N(1)-(5-phospho-D-ribosyl)glycinamide: step 1/2. Its function is as follows. Part of the phosphoribosylformylglycinamidine synthase complex involved in the purines biosynthetic pathway. Catalyzes the ATP-dependent conversion of formylglycinamide ribonucleotide (FGAR) and glutamine to yield formylglycinamidine ribonucleotide (FGAM) and glutamate. The FGAM synthase complex is composed of three subunits. PurQ produces an ammonia molecule by converting glutamine to glutamate. PurL transfers the ammonia molecule to FGAR to form FGAM in an ATP-dependent manner. PurS interacts with PurQ and PurL and is thought to assist in the transfer of the ammonia molecule from PurQ to PurL. This chain is Phosphoribosylformylglycinamidine synthase subunit PurL, found in Campylobacter lari (strain RM2100 / D67 / ATCC BAA-1060).